We begin with the raw amino-acid sequence, 390 residues long: MPTLLRILRPPRSPFTRCLATFATPSSSGSSSRSKFTESLETGPGLDDFISEEVPDRVVLGNTKGPRLPSYLKTSIPSGASFNKIKKDLRGLGLHTVCEEARCPNIGDCWGGKPGATEAEGRSAATATIMLMGDTCTRGCRFCSVKTSRTPPPLDPHEPENTAEAISRWGLGYIVLTSVDRDDLLDGGAHHFAETIRKIKYKAPQILVEALTGDFAGSLDHVSIVAQSGLDVYAHNIETVEELTPFVRDRRATFRQSLKVLEHAKKSGVRITKTSIMLGVGETKEQVLAALKELRKIDVDVVTFGQYMRPTKRHMKVDRYVEPAEFDNWKEVAENLGFLYVASGPLVRSSYKAGEFYIENVLRGKNKAIGGLGISQLEGSEKGSMTGIDR.

Residues Met1–Leu19 constitute a mitochondrion transit peptide. The tract at residues Ala23 to Asp48 is disordered. The [4Fe-4S] cluster site is built by Cys98, Cys103, Cys109, Cys136, Cys140, Cys143, and Ser350. A Radical SAM core domain is found at Ala119–Leu339.

This sequence belongs to the radical SAM superfamily. Lipoyl synthase family. Requires [4Fe-4S] cluster as cofactor.

It localises to the mitochondrion. The catalysed reaction is [[Fe-S] cluster scaffold protein carrying a second [4Fe-4S](2+) cluster] + N(6)-octanoyl-L-lysyl-[protein] + 2 oxidized [2Fe-2S]-[ferredoxin] + 2 S-adenosyl-L-methionine + 4 H(+) = [[Fe-S] cluster scaffold protein] + N(6)-[(R)-dihydrolipoyl]-L-lysyl-[protein] + 4 Fe(3+) + 2 hydrogen sulfide + 2 5'-deoxyadenosine + 2 L-methionine + 2 reduced [2Fe-2S]-[ferredoxin]. Its pathway is protein modification; protein lipoylation via endogenous pathway; protein N(6)-(lipoyl)lysine from octanoyl-[acyl-carrier-protein]: step 2/2. In terms of biological role, catalyzes the radical-mediated insertion of two sulfur atoms into the C-6 and C-8 positions of the octanoyl moiety bound to the lipoyl domains of lipoate-dependent enzymes, thereby converting the octanoylated domains into lipoylated derivatives. This chain is Lipoyl synthase, mitochondrial, found in Laccaria bicolor (strain S238N-H82 / ATCC MYA-4686) (Bicoloured deceiver).